Reading from the N-terminus, the 48-residue chain is Phospholipase A2 TI-Nh (48 aa).

His25 is an active-site residue. Asp26 contributes to the Ca(2+) binding site.

The protein belongs to the phospholipase A2 family. Group I subfamily. D49 sub-subfamily. In terms of assembly, monomer. Ca(2+) is required as a cofactor. Expressed by the venom gland.

The protein resides in the secreted. It catalyses the reaction a 1,2-diacyl-sn-glycero-3-phosphocholine + H2O = a 1-acyl-sn-glycero-3-phosphocholine + a fatty acid + H(+). Its function is as follows. Phospholipase A2 with weak enzymatic activity, which partially inhibits thrombin enzymatic activity (Ki=73 nM), completely inhibits thrombin-induced platelet aggregation and retards fibrin clot formation (IC(50)=0.2 nM). May exert this anticoagulant effect through a non-enzymatic mechanism. The polypeptide is Phospholipase A2 TI-Nh (Naja haje haje (Egyptian cobra)).